A 140-amino-acid chain; its full sequence is Large ribosomal subunit protein uL11 (140 aa).

This sequence belongs to the universal ribosomal protein uL11 family. In terms of assembly, part of the ribosomal stalk of the 50S ribosomal subunit. Interacts with L10 and the large rRNA to form the base of the stalk. L10 forms an elongated spine to which L12 dimers bind in a sequential fashion forming a multimeric L10(L12)X complex. In terms of processing, one or more lysine residues are methylated.

Its function is as follows. Forms part of the ribosomal stalk which helps the ribosome interact with GTP-bound translation factors. The sequence is that of Large ribosomal subunit protein uL11 from Dehalococcoides mccartyi (strain CBDB1).